Here is a 427-residue protein sequence, read N- to C-terminus: Enolase (427 aa).

Glutamine 163 lines the (2R)-2-phosphoglycerate pocket. Glutamate 205 acts as the Proton donor in catalysis. Mg(2+) is bound by residues aspartate 242, glutamate 285, and aspartate 312. (2R)-2-phosphoglycerate is bound by residues lysine 337, arginine 366, serine 367, and lysine 388. Catalysis depends on lysine 337, which acts as the Proton acceptor.

It belongs to the enolase family. Requires Mg(2+) as cofactor.

Its subcellular location is the cytoplasm. The protein localises to the secreted. It is found in the cell surface. It catalyses the reaction (2R)-2-phosphoglycerate = phosphoenolpyruvate + H2O. The protein operates within carbohydrate degradation; glycolysis; pyruvate from D-glyceraldehyde 3-phosphate: step 4/5. Its function is as follows. Catalyzes the reversible conversion of 2-phosphoglycerate (2-PG) into phosphoenolpyruvate (PEP). It is essential for the degradation of carbohydrates via glycolysis. The protein is Enolase of Burkholderia thailandensis (strain ATCC 700388 / DSM 13276 / CCUG 48851 / CIP 106301 / E264).